We begin with the raw amino-acid sequence, 483 residues long: NADH-quinone oxidoreductase subunit N (483 aa).

Transmembrane regions (helical) follow at residues 13–33 (ALPE…DAAV), 39–57 (YLAY…FLTV), 76–96 (PLSD…LVYS), 110–130 (FFVL…ASHF), 131–151 (LTLY…VALQ), 165–185 (FVLG…VYGV), 206–226 (IPLV…LGAV), 240–260 (PTAM…AFVV), 277–297 (MLVI…IAQS), 302–322 (MFAY…LAGS), 330–350 (MFYV…ILLL), 373–393 (LAFV…TVGF), 406–426 (IGYV…AFYY), and 459–479 (LAVL…VQAI).

This sequence belongs to the complex I subunit 2 family. NDH-1 is composed of 14 different subunits. Subunits NuoA, H, J, K, L, M, N constitute the membrane sector of the complex.

The protein localises to the cell inner membrane. It catalyses the reaction a quinone + NADH + 5 H(+)(in) = a quinol + NAD(+) + 4 H(+)(out). NDH-1 shuttles electrons from NADH, via FMN and iron-sulfur (Fe-S) centers, to quinones in the respiratory chain. The immediate electron acceptor for the enzyme in this species is believed to be ubiquinone. Couples the redox reaction to proton translocation (for every two electrons transferred, four hydrogen ions are translocated across the cytoplasmic membrane), and thus conserves the redox energy in a proton gradient. The protein is NADH-quinone oxidoreductase subunit N of Thiobacillus denitrificans (strain ATCC 25259 / T1).